The chain runs to 399 residues: S-adenosylmethionine synthase (399 aa).

His17 provides a ligand contact to ATP. Mg(2+) is bound at residue Asp19. Glu45 lines the K(+) pocket. Positions 58 and 101 each coordinate L-methionine. Residues Gln101–Glu111 are flexible loop. Residues Asp177–Lys179, Arg244–Phe245, Asp253, Arg259–Lys260, Ala276, and Lys280 contribute to the ATP site. Asp253 contacts L-methionine. Lys284 serves as a coordination point for L-methionine.

The protein belongs to the AdoMet synthase family. As to quaternary structure, homotetramer; dimer of dimers. Mg(2+) serves as cofactor. The cofactor is K(+).

It is found in the cytoplasm. The catalysed reaction is L-methionine + ATP + H2O = S-adenosyl-L-methionine + phosphate + diphosphate. Its pathway is amino-acid biosynthesis; S-adenosyl-L-methionine biosynthesis; S-adenosyl-L-methionine from L-methionine: step 1/1. Catalyzes the formation of S-adenosylmethionine (AdoMet) from methionine and ATP. The overall synthetic reaction is composed of two sequential steps, AdoMet formation and the subsequent tripolyphosphate hydrolysis which occurs prior to release of AdoMet from the enzyme. The sequence is that of S-adenosylmethionine synthase from Listeria monocytogenes serovar 1/2a (strain ATCC BAA-679 / EGD-e).